The chain runs to 102 residues: Small ribosomal subunit protein uS10 (102 aa).

Belongs to the universal ribosomal protein uS10 family. In terms of assembly, part of the 30S ribosomal subunit.

Functionally, involved in the binding of tRNA to the ribosomes. This is Small ribosomal subunit protein uS10 from Methanococcus maripaludis (strain C5 / ATCC BAA-1333).